A 155-amino-acid chain; its full sequence is Antitoxin HicB 1 (155 aa).

Residues 99-153 (MLNAFLDSKLTQIELANRMGVKKQEVTRIFDLRHSTKIDTVGKVASAIGHQLTLS) form the HTH cro/C1-type domain. Positions 110–129 (QIELANRMGVKKQEVTRIFD) form a DNA-binding region, H-T-H motif.

It belongs to the HicB antitoxin family. Probably forms a complex with the probable mRNA interferase HicA1 (its cognate toxin); when complexed with HicA 1 inhibits the toxin activity.

Its function is as follows. Antitoxin component of a type II toxin-antitoxin (TA) system. Functions as an mRNA interferase antitoxin preventing effects of the HicA 1 toxin. The protein is Antitoxin HicB 1 (hicB1) of Photorhabdus laumondii subsp. laumondii (strain DSM 15139 / CIP 105565 / TT01) (Photorhabdus luminescens subsp. laumondii).